The primary structure comprises 356 residues: MSPCGRARRQTSRGAMAVLAWKFPRTRLPMGASALCVVVLCWLYIFPVYRLPNEKEIVQGVLQQGTAWRRNQTAARAFRKQMEDCCDPAHLFAMTKMNSPMGKSMWYDGEFLYSFTIDNSTYSLFPQATPFQLPLKKCAVVGNGGILKKSGCGRQIDEANFVMRCNLPPLSSEYTKDVGSKSQLVTANPSIIRQRFQNLLWSRKTFVDNMKIYNHSYIYMPAFSMKTGTEPSLRVYYTLSDVGANQTVLFANPNFLRSIGKFWKSRGIHAKRLSTGLFLVSAALGLCEEVAIYGFWPFSVNMHEQPISHHYYDNVLPFSGFHAMPEEFLQLWYLHKIGALRMQLERCEDTSLQPTS.

Topologically, residues 1–29 (MSPCGRARRQTSRGAMAVLAWKFPRTRLP) are cytoplasmic. A helical; Signal-anchor for type II membrane protein membrane pass occupies residues 30–48 (MGASALCVVVLCWLYIFPV). Residues 49-356 (YRLPNEKEIV…CEDTSLQPTS (308 aa)) are Lumenal-facing. N-linked (GlcNAc...) asparagine glycosylation is found at Asn71 and Asn119. 2 cysteine pairs are disulfide-bonded: Cys138–Cys287 and Cys152–Cys347. CMP-N-acetyl-beta-neuraminate-binding residues include Asn143 and Asn166. Residues Asn214 and Asn245 are each glycosylated (N-linked (GlcNAc...) asparagine). CMP-N-acetyl-beta-neuraminate is bound by residues Ser274, Thr275, Gly276, Trp296, and His310. His322 serves as the catalytic Proton donor/acceptor.

This sequence belongs to the glycosyltransferase 29 family.

Its subcellular location is the golgi apparatus membrane. It catalyses the reaction an N-acetyl-alpha-neuraminyl-(2-&gt;3)-beta-D-galactosyl derivative + CMP-N-acetyl-beta-neuraminate = an N-acetyl-alpha-neuraminyl-(2-&gt;8)-N-acetyl-alpha-neuraminyl-(2-&gt;3)-beta-D-galactosyl derivative + CMP + H(+). The enzyme catalyses a ganglioside GM3 (d18:1(4E)) + CMP-N-acetyl-beta-neuraminate = a ganglioside GD3 (d18:1(4E)) + CMP + H(+). It carries out the reaction a ganglioside GD3 (d18:1(4E)) + CMP-N-acetyl-beta-neuraminate = a ganglioside GT3 (d18:1(4E)) + CMP + H(+). The catalysed reaction is a ganglioside GD1a (d18:1(4E)) + CMP-N-acetyl-beta-neuraminate = a ganglioside GT1a (d18:1(4E)) + CMP + H(+). It catalyses the reaction a ganglioside GT1b (d18:1(4E)) + CMP-N-acetyl-beta-neuraminate = a ganglioside GQ1b (d18:1(4E)) + CMP + H(+). The enzyme catalyses a ganglioside GM1b (d18:1(4E)) + CMP-N-acetyl-beta-neuraminate = a ganglioside GD1c (d18:1(4E)) + CMP + H(+). It carries out the reaction a ganglioside GD3 + CMP-N-acetyl-beta-neuraminate = a ganglioside GT3 + CMP + H(+). The catalysed reaction is [alpha-N-acetylneuraminyl-(2-&gt;8)](n)-alpha-N-acetylneuraminyl-(2-&gt;8)-alpha-N-acetylneuraminyl-(2-&gt;3)-beta-D-galactosyl-(1-&gt;4)-beta-D-glucosyl-(1&lt;-&gt;1)-ceramide + CMP-N-acetyl-beta-neuraminate = [alpha-N-acetylneuraminyl-(2-&gt;8)](n+1)-alpha-N-acetylneuraminyl-(2-&gt;8)-alpha-N-acetylneuraminyl-(2-&gt;3)-beta-D-galactosyl-(1-&gt;4)-beta-D-glucosyl-(1&lt;-&gt;1)-ceramide + CMP + H(+). It functions in the pathway protein modification; protein glycosylation. It participates in lipid metabolism; sphingolipid metabolism. Catalyzes the addition of sialic acid in alpha 2,8-linkage to the sialic acid moiety of the ganglioside GM3 to form ganglioside GD3; gangliosides are a subfamily of complex glycosphingolipds that contain one or more residues of sialic acid. Can catalyze the addition of a second alpha-2,8- sialic acid to GD3 to form GT3. Can use GM1b, GD1a and GT1b as acceptor substrates to synthesize GD1c, GT1a and GQ1b respectively. The protein is Alpha-N-acetylneuraminide alpha-2,8-sialyltransferase of Pan troglodytes (Chimpanzee).